The primary structure comprises 1309 residues: Angiotensin-converting enzyme (1309 aa).

Residues methionine 1–alanine 33 form the signal peptide. The Extracellular segment spans residues leucine 34–arginine 1259. 7 N-linked (GlcNAc...) asparagine glycosylation sites follow: asparagine 42, asparagine 58, asparagine 78, asparagine 115, asparagine 135, asparagine 150, and asparagine 164. 2 Peptidase M2 domains span residues threonine 44–proline 627 and valine 646–proline 1225. Cysteine 161 and cysteine 169 form a disulfide bridge. Tyrosine 235 lines the chloride pocket. N-linked (GlcNAc...) asparagine glycosylation occurs at asparagine 322. Cysteine 363 and cysteine 381 are joined by a disulfide. Histidine 394 serves as a coordination point for Zn(2+). Glutamate 395 (proton acceptor 1) is an active-site residue. Residues histidine 398 and glutamate 422 each coordinate Zn(2+). N-linked (GlcNAc...) asparagine glycosylation is present at asparagine 512. The active-site Proton donor 1 is the histidine 523. The N-linked (GlcNAc...) asparagine glycan is linked to asparagine 526. Residue arginine 532 participates in chloride binding. A disulfide bridge links cysteine 548 with cysteine 560. N-linked (GlcNAc...) asparagine glycans are attached at residues asparagine 680, asparagine 698, asparagine 717, and asparagine 763. Residues cysteine 760 and cysteine 766 are joined by a disulfide bond. Chloride-binding residues include arginine 794 and tyrosine 832. Asparagine 945 is a glycosylation site (N-linked (GlcNAc...) asparagine). Cysteine 960 and cysteine 978 are oxidised to a cystine. Residue histidine 991 coordinates Zn(2+). The Proton acceptor 2 role is filled by glutamate 992. Histidine 995 and glutamate 1019 together coordinate Zn(2+). Tryptophan 1093 and arginine 1097 together coordinate chloride. Histidine 1121 functions as the Proton donor 2 in the catalytic mechanism. Residue arginine 1130 coordinates chloride. Cysteine 1146 and cysteine 1158 are joined by a disulfide. Asparagine 1194 and asparagine 1228 each carry an N-linked (GlcNAc...) asparagine glycan. The interval histidine 1218–arginine 1259 is juxtamembrane stalk. The helical transmembrane segment at valine 1260–threonine 1280 threads the bilayer. The Cytoplasmic portion of the chain corresponds to glutamine 1281–serine 1309. At serine 1302 the chain carries Phosphoserine.

Belongs to the peptidase M2 family. In terms of assembly, monomer and homodimer; homodimerizes following binding to an inhibitor. Interacts with calmodulin (CALM1, CALM2 or CALM3); interaction takes place in the cytoplasmic region and regulates phosphorylation and proteolytic cleavage. The cofactor is Zn(2+). Chloride is required as a cofactor. Produced following proteolytic cleavage by secretase enzymes that cleave the transmembrane form in the juxtamembrane stalk region upstream of the transmembrane region. Cleavage can take place at different sites of the juxtamembrane stalk region. Post-translationally, phosphorylated by CK2 on Ser-1302; which allows membrane retention. Phosphorylated on tyrosine residues on its extracellular part, promoting cleavage by secretase enzymes and formation of the soluble form (Angiotensin-converting enzyme, soluble form).

The protein localises to the cell membrane. It is found in the cytoplasm. It localises to the secreted. The catalysed reaction is Release of a C-terminal dipeptide, oligopeptide-|-Xaa-Yaa, when Xaa is not Pro, and Yaa is neither Asp nor Glu. Thus, conversion of angiotensin I to angiotensin II, with increase in vasoconstrictor activity, but no action on angiotensin II.. The enzyme catalyses angiotensin I + H2O = L-histidyl-L-leucine + angiotensin II. It catalyses the reaction bradykinin + H2O = L-Phe-L-Arg + bradykinin(1-7). It carries out the reaction substance P + H2O = substance P(1-9) + L-Leu-L-Met-NH2. The catalysed reaction is substance P + H2O = substance P(1-8) + Gly-L-Leu-L-Met-NH2. The enzyme catalyses substance P + H2O = L-Phe-L-Phe-Gly-L-Leu-L-Met-NH2 + substance P(1-6). It catalyses the reaction neurotensin + H2O = neurotensin(1-11) + L-isoleucyl-L-leucine. It carries out the reaction goralatide + H2O = N-acetyl-L-seryl-L-aspartate + L-lysyl-L-proline. The catalysed reaction is Met-enkephalin + H2O = L-phenylalanyl-L-methionine + L-tyrosylglycylglycine. The enzyme catalyses Leu-enkephalin + H2O = L-tyrosylglycylglycine + L-phenylalanyl-L-leucine. It catalyses the reaction Met-enkephalin-Arg-Phe + H2O = L-arginyl-L-phenylalanine + Met-enkephalin. The dipeptidyl carboxypeptidase activity is strongly activated by chloride. The dipeptidyl carboxypeptidase activity is specifically inhibited by lisinopril, captopril and enalaprilat. Its function is as follows. Dipeptidyl carboxypeptidase that removes dipeptides from the C-terminus of a variety of circulating hormones, such as angiotensin I, bradykinin or enkephalins, thereby playing a key role in the regulation of blood pressure, electrolyte homeostasis or synaptic plasticity. Composed of two similar catalytic domains, each possessing a functional active site, with different selectivity for substrates. Plays a major role in the angiotensin-renin system that regulates blood pressure and sodium retention by the kidney by converting angiotensin I to angiotensin II, resulting in an increase of the vasoconstrictor activity of angiotensin. Also able to inactivate bradykinin, a potent vasodilator, and therefore enhance the blood pressure response. Acts as a regulator of synaptic transmission by mediating cleavage of neuropeptide hormones, such as substance P, neurotensin or enkephalins. Catalyzes degradation of different enkephalin neuropeptides (Met-enkephalin, Leu-enkephalin, Met-enkephalin-Arg-Phe and possibly Met-enkephalin-Arg-Gly-Leu). Acts as a regulator of synaptic plasticity in the nucleus accumbens of the brain by mediating cleavage of Met-enkephalin-Arg-Phe, a strong ligand of Mu-type opioid receptor OPRM1, into Met-enkephalin. Met-enkephalin-Arg-Phe cleavage by ACE decreases activation of OPRM1, leading to long-term synaptic potentiation of glutamate release. Also acts as a regulator of hematopoietic stem cell differentiation by mediating degradation of hemoregulatory peptide N-acetyl-SDKP (AcSDKP). Acts as a regulator of cannabinoid signaling pathway by mediating degradation of hemopressin, an antagonist peptide of the cannabinoid receptor CNR1. Involved in amyloid-beta metabolism by catalyzing degradation of Amyloid-beta protein 40 and Amyloid-beta protein 42 peptides, thereby preventing plaque formation. Catalyzes cleavage of cholecystokinin (maturation of Cholecystokinin-8 and Cholecystokinin-5) and Gonadoliberin-1 (both maturation and degradation) hormones. Degradation of hemoregulatory peptide N-acetyl-SDKP (AcSDKP) and amyloid-beta proteins is mediated by the N-terminal catalytic domain, while angiotensin I and cholecystokinin cleavage is mediated by the C-terminal catalytic region. Functionally, soluble form that is released in blood plasma and other body fluids following proteolytic cleavage in the juxtamembrane stalk region. The chain is Angiotensin-converting enzyme from Sus scrofa (Pig).